We begin with the raw amino-acid sequence, 466 residues long: FERM domain-containing protein 8 (466 aa).

Met-1 bears the N-acetylmethionine mark. Positions 1–21 (MEGAEGNAGQPGPAERSHRSS) are disordered. The residue at position 24 (Ser-24) is a Phosphoserine. The FERM domain occupies 30–377 (ADVLVYLADD…YCIELSQAAE (348 aa)). The disordered stretch occupies residues 379–409 (TLSQESASGPHEAPSPSPPPTQRPKLRRQGS). Ser-384 bears the Phosphoserine mark. Over residues 391 to 400 (APSPSPPPTQ) the composition is skewed to pro residues. The residue at position 409 (Ser-409) is a Phosphoserine. Thr-420 carries the post-translational modification Phosphothreonine. Ser-440 and Ser-447 each carry phosphoserine. Over residues 442 to 460 (FSRQLSSSQGSYTVVQPTD) the composition is skewed to polar residues. A disordered region spans residues 442 to 466 (FSRQLSSSQGSYTVVQPTDDSLEQS).

Interacts with iRhom proteins, including iRhom2/RHBDF2 (via cytoplasmic N-termini); this interaction leads to mutual protein stabilization. Interacts with LRP6; this interaction affects LRP6-binding to AXIN1. As to expression, widely expressed (at protein level).

The protein resides in the cytoplasm. It localises to the cytosol. Its subcellular location is the cell membrane. Functionally, promotes the cell surface stability of iRhom1/RHBDF1 and iRhom2/RHBDF2 and prevents their degradation via the endolysosomal pathway. By acting on iRhoms, involved in ADAM17-mediated shedding of TNF, amphiregulin/AREG, HBEGF and TGFA from the cell surface. Negatively regulates Wnt signaling, possibly by antagonizing the recruitment of AXIN1 to LRP6. The protein is FERM domain-containing protein 8 (Frmd8) of Mus musculus (Mouse).